A 431-amino-acid chain; its full sequence is Phosphoribosylamine--glycine ligase (431 aa).

In terms of domain architecture, ATP-grasp spans 108 to 315 (KDFLARHEIP…LVLLVEAAFA (208 aa)). 134–195 (LQEKGAPIVI…EEFLDGEEAS (62 aa)) contacts ATP. Residues E285 and N287 each contribute to the Mg(2+) site.

This sequence belongs to the GARS family. Mg(2+) is required as a cofactor. It depends on Mn(2+) as a cofactor.

The catalysed reaction is 5-phospho-beta-D-ribosylamine + glycine + ATP = N(1)-(5-phospho-beta-D-ribosyl)glycinamide + ADP + phosphate + H(+). Its pathway is purine metabolism; IMP biosynthesis via de novo pathway; N(1)-(5-phospho-D-ribosyl)glycinamide from 5-phospho-alpha-D-ribose 1-diphosphate: step 2/2. This chain is Phosphoribosylamine--glycine ligase, found in Pseudomonas putida (strain ATCC 47054 / DSM 6125 / CFBP 8728 / NCIMB 11950 / KT2440).